The following is a 645-amino-acid chain: DNA ligase (645 aa).

NAD(+) contacts are provided by residues Asp30 to Asp34 and Ser72 to Gln73. Residue Lys99 is the N6-AMP-lysine intermediate of the active site. Arg120, Glu163, Lys275, and Lys296 together coordinate NAD(+). Zn(2+)-binding residues include Cys387, Cys390, Cys403, and Cys408. Residues Glu564 to Val645 form the BRCT domain.

Belongs to the NAD-dependent DNA ligase family. LigA subfamily. The cofactor is Mg(2+). Mn(2+) serves as cofactor.

The enzyme catalyses NAD(+) + (deoxyribonucleotide)n-3'-hydroxyl + 5'-phospho-(deoxyribonucleotide)m = (deoxyribonucleotide)n+m + AMP + beta-nicotinamide D-nucleotide.. Functionally, DNA ligase that catalyzes the formation of phosphodiester linkages between 5'-phosphoryl and 3'-hydroxyl groups in double-stranded DNA using NAD as a coenzyme and as the energy source for the reaction. It is essential for DNA replication and repair of damaged DNA. The protein is DNA ligase of Treponema denticola (strain ATCC 35405 / DSM 14222 / CIP 103919 / JCM 8153 / KCTC 15104).